Here is a 185-residue protein sequence, read N- to C-terminus: Signal peptidase I (185 aa).

At 1 to 20 (MKSEKEKTSKKSAVLDWAKA) the chain is on the cytoplasmic side. A helical membrane pass occupies residues 21-41 (IIIAVVLAVLIRNFLFAPYVV). Residues 42–185 (DGESMEPTLH…FPFNEIRKTK (144 aa)) lie on the Extracellular side of the membrane. Residues serine 45 and lysine 85 contribute to the active site.

Belongs to the peptidase S26 family.

The protein resides in the cell membrane. The catalysed reaction is Cleavage of hydrophobic, N-terminal signal or leader sequences from secreted and periplasmic proteins.. The polypeptide is Signal peptidase I (sipA) (Bacillus amyloliquefaciens (Bacillus velezensis)).